The primary structure comprises 2223 residues: Protein CHROMATIN REMODELING 4 (2223 aa).

Residues phenylalanine 39–lysine 69 form a disordered region. The segment covering leucine 55–lysine 69 has biased composition (basic and acidic residues). The PHD-type zinc finger occupies tyrosine 75–asparagine 122. Composition is skewed to basic and acidic residues over residues glutamate 173 to glycine 187, serine 207 to glycine 223, glutamate 248 to lysine 285, and glutamate 294 to lysine 305. Disordered regions lie at residues glutamate 173–aspartate 235, glutamate 248–aspartate 381, and alanine 441–glycine 474. The segment covering threonine 306–leucine 315 has biased composition (basic residues). The segment covering glutamate 353 to alanine 368 has biased composition (basic and acidic residues). Polar residues predominate over residues threonine 372–aspartate 381. Positions alanine 441–aspartate 466 are enriched in basic and acidic residues. 2 consecutive Chromo domains span residues glutamate 531–lysine 587 and lysine 601–serine 663. The Helicase ATP-binding domain occupies arginine 701–serine 878. Aspartate 714–threonine 721 lines the ATP pocket. Residues aspartate 829 to histidine 832 carry the DEAH box motif. Residues leucine 902–histidine 909 carry the Nuclear localization signal motif. Positions leucine 1008–leucine 1167 constitute a Helicase C-terminal domain. Disordered stretches follow at residues glutamate 1268–valine 1300, glutamate 1341–lysine 1380, arginine 1394–proline 1463, serine 1483–proline 1511, leucine 1760–phenylalanine 1779, and isoleucine 2006–aspartate 2223. Basic and acidic residues predominate over residues glutamate 1363 to lysine 1380. Positions arginine 1375–leucine 1402 form a coiled coil. Over residues proline 1403 to alanine 1414 the composition is skewed to polar residues. The segment covering phenylalanine 2009 to proline 2019 has biased composition (pro residues). The segment covering serine 2025–histidine 2035 has biased composition (basic residues). Composition is skewed to polar residues over residues glutamine 2039–glutamine 2061, glycine 2075–leucine 2096, and threonine 2128–glutamine 2148. The segment covering aspartate 2157–glutamate 2171 has biased composition (basic and acidic residues). Residues isoleucine 2189–valine 2215 are a coiled coil. The segment covering alanine 2198–glutamate 2210 has biased composition (acidic residues).

This sequence belongs to the SNF2/RAD54 helicase family.

The protein localises to the nucleus. Chromatin-remodeling protein that binds DNA through histones and regulates gene transcription. May specifically recognize and bind trimethylated 'Lys-27' (H3K27me3) and non-methylated 'Lys-4' of histone H3. Probable chromatin remodeling factor. This chain is Protein CHROMATIN REMODELING 4, found in Arabidopsis thaliana (Mouse-ear cress).